A 184-amino-acid chain; its full sequence is MEKPMASSGPAELFTRVDDYSVANAAAAANEGIVMTTLDAAVNWARKNSIWPMTFGLACCAIEMMSMSASRFDIARFGAEVFRGSPRQSDLMIIAGRVSNKMAPVIRHLYQQMPEPKWAISMGACATSTGVFNNYALIPVNQVIPIDVFVPGCPPRPEQLIYALMMLQEKIKNQSGTVKSVLNL.

[4Fe-4S] cluster is bound by residues Cys59, Cys60, Cys125, and Cys153.

Belongs to the complex I 20 kDa subunit family. As to quaternary structure, NDH-1 is composed of 14 different subunits. Subunits NuoB, C, D, E, F, and G constitute the peripheral sector of the complex. It depends on [4Fe-4S] cluster as a cofactor.

The protein resides in the cell inner membrane. The enzyme catalyses a quinone + NADH + 5 H(+)(in) = a quinol + NAD(+) + 4 H(+)(out). Its function is as follows. NDH-1 shuttles electrons from NADH, via FMN and iron-sulfur (Fe-S) centers, to quinones in the respiratory chain. Couples the redox reaction to proton translocation (for every two electrons transferred, four hydrogen ions are translocated across the cytoplasmic membrane), and thus conserves the redox energy in a proton gradient. This chain is NADH-quinone oxidoreductase subunit B 2, found in Solibacter usitatus (strain Ellin6076).